We begin with the raw amino-acid sequence, 375 residues long: Alanine racemase (375 aa).

Residue Lys35 is the Proton acceptor; specific for D-alanine of the active site. Lys35 carries the N6-(pyridoxal phosphate)lysine modification. Arg133 contributes to the substrate binding site. The active-site Proton acceptor; specific for L-alanine is the Tyr261. Met309 lines the substrate pocket.

This sequence belongs to the alanine racemase family. Pyridoxal 5'-phosphate serves as cofactor.

The enzyme catalyses L-alanine = D-alanine. It functions in the pathway amino-acid biosynthesis; D-alanine biosynthesis; D-alanine from L-alanine: step 1/1. Catalyzes the interconversion of L-alanine and D-alanine. May also act on other amino acids. This is Alanine racemase (alr) from Syntrophobacter fumaroxidans (strain DSM 10017 / MPOB).